The chain runs to 429 residues: MAKIVDIKGREVLDSRGNPTVEADVLLDNGIIGSACAPSGASTGSREALELRDGDKSRYLGKGVLKAVANINGPIRDLLLGKDPSDQKALDRAMIELDGTENKAKLGANAILAVSLAAAKAAAQDQDLPLYAHIANLNGTPGQYSMPVPMMNIINGGEHADNNVDIQEFMVQPVGAKTFSDGLRMGTEIFHHLKAVLKARGLNTAVGDEGGFAPNLASNEDALGAIAEAVEKAGYKLGTDVTLALDCAASEFYEDGKYNLSGEGKSFDAEGFADYLKGLTERFPIISIEDGLDESDWAGWKILTDKIGEKVQLVGDDLFVTNTKILKEGIEKGIGNSILIKFNQIGSLTETLEAIQMAKAAGYTAVISHRSGETEDSTIADLAVGTAAGQIKTGSLCRSDRVSKYNQLLRIEEQLGAKAVYRGRAEFRG.

Residue Gln167 participates in (2R)-2-phosphoglycerate binding. Glu209 acts as the Proton donor in catalysis. Mg(2+) is bound by residues Asp246, Glu289, and Asp316. The (2R)-2-phosphoglycerate site is built by Lys341, Arg370, Ser371, and Lys392. The active-site Proton acceptor is the Lys341.

Belongs to the enolase family. In terms of assembly, component of the RNA degradosome, a multiprotein complex involved in RNA processing and mRNA degradation. Requires Mg(2+) as cofactor.

Its subcellular location is the cytoplasm. It localises to the secreted. The protein localises to the cell surface. It carries out the reaction (2R)-2-phosphoglycerate = phosphoenolpyruvate + H2O. Its pathway is carbohydrate degradation; glycolysis; pyruvate from D-glyceraldehyde 3-phosphate: step 4/5. Catalyzes the reversible conversion of 2-phosphoglycerate (2-PG) into phosphoenolpyruvate (PEP). It is essential for the degradation of carbohydrates via glycolysis. The protein is Enolase of Pseudomonas putida (strain ATCC 47054 / DSM 6125 / CFBP 8728 / NCIMB 11950 / KT2440).